A 572-amino-acid chain; its full sequence is Proline--tRNA ligase (572 aa).

This sequence belongs to the class-II aminoacyl-tRNA synthetase family. ProS type 1 subfamily. Homodimer.

Its subcellular location is the cytoplasm. The catalysed reaction is tRNA(Pro) + L-proline + ATP = L-prolyl-tRNA(Pro) + AMP + diphosphate. Functionally, catalyzes the attachment of proline to tRNA(Pro) in a two-step reaction: proline is first activated by ATP to form Pro-AMP and then transferred to the acceptor end of tRNA(Pro). As ProRS can inadvertently accommodate and process non-cognate amino acids such as alanine and cysteine, to avoid such errors it has two additional distinct editing activities against alanine. One activity is designated as 'pretransfer' editing and involves the tRNA(Pro)-independent hydrolysis of activated Ala-AMP. The other activity is designated 'posttransfer' editing and involves deacylation of mischarged Ala-tRNA(Pro). The misacylated Cys-tRNA(Pro) is not edited by ProRS. This is Proline--tRNA ligase from Salmonella dublin (strain CT_02021853).